A 503-amino-acid polypeptide reads, in one-letter code: 2-isopropylmalate synthase (503 aa).

The Pyruvate carboxyltransferase domain occupies 4-264; sequence LYIFDTTLRD…EVSIKTEEIY (261 aa). Aspartate 13, histidine 201, histidine 203, and asparagine 237 together coordinate Mn(2+). The interval 388–503 is regulatory domain; it reads KLRHLQVVSG…NQLVMLKGKD (116 aa).

Belongs to the alpha-IPM synthase/homocitrate synthase family. LeuA type 1 subfamily. As to quaternary structure, homodimer. The cofactor is Mn(2+).

The protein resides in the cytoplasm. It carries out the reaction 3-methyl-2-oxobutanoate + acetyl-CoA + H2O = (2S)-2-isopropylmalate + CoA + H(+). It functions in the pathway amino-acid biosynthesis; L-leucine biosynthesis; L-leucine from 3-methyl-2-oxobutanoate: step 1/4. Functionally, catalyzes the condensation of the acetyl group of acetyl-CoA with 3-methyl-2-oxobutanoate (2-ketoisovalerate) to form 3-carboxy-3-hydroxy-4-methylpentanoate (2-isopropylmalate). The chain is 2-isopropylmalate synthase from Dictyoglomus turgidum (strain DSM 6724 / Z-1310).